Consider the following 301-residue polypeptide: Small ribosomal subunit protein uS2 (301 aa).

The disordered stretch occupies residues 282–301 (VRKQPVSENENVEAAAAEQK). A compositionally biased stretch (low complexity) spans 289–301 (ENENVEAAAAEQK).

The protein belongs to the universal ribosomal protein uS2 family.

The polypeptide is Small ribosomal subunit protein uS2 (Koribacter versatilis (strain Ellin345)).